A 236-amino-acid chain; its full sequence is Mitochondrial-abundant heat soluble protein (236 aa).

The N-terminal 73 residues, 1–73, are a transit peptide targeting the mitochondrion; sequence MSRYLLRDVQ…AARAGVVLRG (73 aa). Disordered regions lie at residues 102-135 and 165-209; these read RIHS…NEAA and RSNG…EIVA. 2 stretches are compositionally biased toward polar residues: residues 105–126 and 192–202; these read SQSS…NSPQ and APDSSKNTKSV. Residues 126-143 carry the MAHS motif motif; that stretch reads QPEGKANEAAERAKQFMN.

The protein localises to the mitochondrion. Mitochondrial heat soluble protein acting as a molecular shield in water-deficient condition. The chain is Mitochondrial-abundant heat soluble protein from Ramazzottius varieornatus (Water bear).